The primary structure comprises 460 residues: Angiopoietin-related protein 3 (460 aa).

Positions 1 to 16 (MFTIKLLLFIVPLVIS) are cleaved as a signal peptide. Positions 17–165 (SRIDQDNSSF…PEHPEVTSLK (149 aa)) are sufficient to inhibit LPL lipase activity. A sufficient to inhibit LIPG/EL phospholipase activity region spans residues 17-207 (SRIDQDNSSF…EIENQLRRTS (191 aa)). A required for inhibition of LPL lipase activity region spans residues 32 to 56 (EPKSRFAMLDDVKILANGLLQLGHG). Positions 85 to 210 (LSLQTSEIKE…NQLRRTSIQE (126 aa)) form a coiled coil. N-linked (GlcNAc...) asparagine glycosylation is present at asparagine 115. Threonine 226 is a glycosylation site (O-linked (GalNAc) threonine). A Fibrinogen C-terminal domain is found at 237-455 (VKHDGIPAEC…STKMLIHPTD (219 aa)). An intrachain disulfide couples cysteine 246 to cysteine 274. 2 N-linked (GlcNAc...) asparagine glycosylation sites follow: asparagine 296 and asparagine 357. Cysteine 394 and cysteine 408 are joined by a disulfide.

In terms of assembly, interacts with ANGPTL8. Interacts with ITGB3. In terms of processing, O-glycosylated at Thr-226 by GALNT2; blocks processing and activation by proprotein convertases. Post-translationally, in part proteolytically cleaved by proprotein convertases; proposed to be involved in activation. Expressed principally in liver. Weakly expressed in kidney. Binds to adipocytes. Increased expression and colocalization with activated ITGB3 in glomeruli of patients with nephrotic syndrome showing effaced podocyte foot processes (at protein level).

It is found in the secreted. The protein resides in the cell projection. Its subcellular location is the lamellipodium. Its function is as follows. Acts in part as a hepatokine that is involved in regulation of lipid and glucose metabolism. Proposed to play a role in the trafficking of energy substrates to either storage or oxidative tissues in response to food intake. Has a stimulatory effect on plasma triglycerides (TG), which is achieved by suppressing plasma TG clearance via inhibition of LPL activity. The inhibition of LPL activity appears to be an indirect mechanism involving recruitment of proprotein convertases PCSK6 and FURIN to LPL leading to cleavage and dissociation of LPL from the cell surface; the function does not require ANGPTL3 proteolytic cleavage but seems to be mediated by the N-terminal domain, and is not inhibited by GPIHBP1. Can inhibit endothelial lipase, causing increased plasma levels of high density lipoprotein (HDL) cholesterol and phospholipids. Can bind to adipocytes to activate lipolysis, releasing free fatty acids and glycerol. Suppresses LPL specifically in oxidative tissues which is required to route very low density lipoprotein (VLDL)-TG to white adipose tissue (WAT) for storage in response to food; the function may involve cooperation with circulating, liver-derived ANGPTL8 and ANGPTL4 expression in WAT. Contributes to lower plasma levels of low density lipoprotein (LDL)-cholesterol by a mechanism that is independent of the canonical pathway implicating APOE and LDLR. May stimulate hypothalamic LPL activity. In terms of biological role, in vitro inhibits LPL activity; not effective on GPIHBP1-stabilized LPL. Functionally, involved in angiogenesis. Binds to endothelial cells via integrin alpha-V/beta-3 (ITGAV:ITGB3), activates FAK, MAPK and Akt signaling pathways and induces cell adhesion and cell migration. Secreted from podocytes, may modulate properties of glomerular endothelial cells involving integrin alpha-V/beta-3 and Akt signaling. May increase the motility of podocytes. May induce actin filament rearrangements in podocytes implicating integrin alpha-V/beta-3 and Rac1 activation. Binds to hematopoietic stem cells (HSC) and is involved in the regulation of HSC activity probably implicating down-regulation of IKZF1/IKAROS. This is Angiopoietin-related protein 3 (ANGPTL3) from Homo sapiens (Human).